Reading from the N-terminus, the 89-residue chain is Large ribosomal subunit protein uL29c (89 aa).

This sequence belongs to the universal ribosomal protein uL29 family.

The protein resides in the plastid. It localises to the chloroplast. This is Large ribosomal subunit protein uL29c (rpl29) from Trieres chinensis (Marine centric diatom).